A 512-amino-acid polypeptide reads, in one-letter code: Histidine ammonia-lyase (512 aa).

Positions 143-145 (CSG) form a cross-link, 5-imidazolinone (Cys-Gly). The residue at position 144 (Ser144) is a 2,3-didehydroalanine (Ser).

This sequence belongs to the PAL/histidase family. Post-translationally, contains an active site 4-methylidene-imidazol-5-one (MIO), which is formed autocatalytically by cyclization and dehydration of residues Cys-Ser-Gly.

It is found in the cytoplasm. It carries out the reaction L-histidine = trans-urocanate + NH4(+). Its pathway is amino-acid degradation; L-histidine degradation into L-glutamate; N-formimidoyl-L-glutamate from L-histidine: step 1/3. The polypeptide is Histidine ammonia-lyase (Streptomyces coelicolor (strain ATCC BAA-471 / A3(2) / M145)).